We begin with the raw amino-acid sequence, 389 residues long: tRNA-specific 2-thiouridylase MnmA (389 aa).

Residues 9–16 and methionine 35 each bind ATP; that span reads GMSGGVDS. Positions 95–97 are interaction with target base in tRNA; that stretch reads NPD. Catalysis depends on cysteine 100, which acts as the Nucleophile. A disulfide bridge connects residues cysteine 100 and cysteine 196. Glycine 124 lines the ATP pocket. The interaction with tRNA stretch occupies residues 146–148; it reads KDQ. Residue cysteine 196 is the Cysteine persulfide intermediate of the active site. Positions 308–309 are interaction with tRNA; sequence RY.

The protein belongs to the MnmA/TRMU family.

Its subcellular location is the cytoplasm. It catalyses the reaction S-sulfanyl-L-cysteinyl-[protein] + uridine(34) in tRNA + AH2 + ATP = 2-thiouridine(34) in tRNA + L-cysteinyl-[protein] + A + AMP + diphosphate + H(+). In terms of biological role, catalyzes the 2-thiolation of uridine at the wobble position (U34) of tRNA, leading to the formation of s(2)U34. The protein is tRNA-specific 2-thiouridylase MnmA of Burkholderia ambifaria (strain MC40-6).